The primary structure comprises 61 residues: Large ribosomal subunit protein uL30 (61 aa).

Residues 1 to 20 (MSQKKVTVRQVGSPIGRKPE) are disordered.

Belongs to the universal ribosomal protein uL30 family. As to quaternary structure, part of the 50S ribosomal subunit.

The chain is Large ribosomal subunit protein uL30 from Hyphomonas neptunium (strain ATCC 15444).